The chain runs to 419 residues: Peptide chain release factor subunit 1 (419 aa).

This sequence belongs to the eukaryotic release factor 1 family. As to quaternary structure, heterodimer of two subunits, one of which binds GTP.

It localises to the cytoplasm. Functionally, directs the termination of nascent peptide synthesis (translation) in response to the termination codons UAA, UAG and UGA. This is Peptide chain release factor subunit 1 from Methanococcus maripaludis (strain C6 / ATCC BAA-1332).